The primary structure comprises 571 residues: 5' exonuclease Apollo (571 aa).

Disordered stretches follow at residues 346–386 (TSRP…TDRN) and 431–487 (MDDN…SMHD). Composition is skewed to basic and acidic residues over residues 367 to 386 (NHDD…TDRN) and 453 to 468 (ECDH…EKSP). The segment covering 470–487 (MGSTNSGEMCSSMDSMHD) has biased composition (polar residues). The TBM signature appears at 501-532 (NPQSVTSAIPITLESEQFEHWLLENFTIPAEE).

It belongs to the DNA repair metallo-beta-lactamase (DRMBL) family. In terms of assembly, interacts with terf2; the interaction is direct.

It localises to the chromosome. The protein localises to the telomere. The protein resides in the nucleus. It catalyses the reaction a beta-lactam + H2O = a substituted beta-amino acid. Functionally, 5'-3' exonuclease that plays a central role in telomere maintenance and protection during S-phase. Participates in the protection of telomeres against non-homologous end-joining (NHEJ)-mediated repair, thereby ensuring that telomeres do not fuse. Plays a key role in telomeric loop (T loop) formation by being recruited by terf2 at the leading end telomeres and by processing leading-end telomeres immediately after their replication via its exonuclease activity: generates 3' single-stranded overhang at the leading end telomeres avoiding blunt leading-end telomeres that are vulnerable to end-joining reactions and expose the telomere end in a manner that activates the DNA repair pathways. Possesses beta-lactamase activity, catalyzing the hydrolysis of penicillin G and nitrocefin. Exhibits no activity towards other beta-lactam antibiotic classes including cephalosporins (cefotaxime) and carbapenems (imipenem). This is 5' exonuclease Apollo (dclre1b) from Danio rerio (Zebrafish).